The primary structure comprises 92 residues: Small ribosomal subunit protein uS19 (92 aa).

It belongs to the universal ribosomal protein uS19 family.

Protein S19 forms a complex with S13 that binds strongly to the 16S ribosomal RNA. The protein is Small ribosomal subunit protein uS19 of Methylorubrum extorquens (strain CM4 / NCIMB 13688) (Methylobacterium extorquens).